Consider the following 251-residue polypeptide: Putative integrase/recombinase y4eF (251 aa).

The region spanning Met-1–Leu-40 is the Core-binding (CB) domain. Positions Lys-58 to Ser-231 constitute a Tyr recombinase domain. Active-site residues include Arg-93, Lys-118, His-183, Arg-186, and His-209. Tyr-218 serves as the catalytic O-(3'-phospho-DNA)-tyrosine intermediate.

The protein belongs to the 'phage' integrase family.

This Sinorhizobium fredii (strain NBRC 101917 / NGR234) protein is Putative integrase/recombinase y4eF.